A 151-amino-acid polypeptide reads, in one-letter code: Cytochrome c-type biogenesis protein CcmE 2 (151 aa).

At 1–8 the chain is on the cytoplasmic side; the sequence is MNPLRKKR. Residues 9 to 29 form a helical; Signal-anchor for type II membrane protein membrane-spanning segment; sequence LVIILAILVGVGAAVGLALSA. Topologically, residues 30–151 are periplasmic; it reads LQQNINLFYT…QSAPAPGKEG (122 aa). Histidine 124 and tyrosine 128 together coordinate heme.

Belongs to the CcmE/CycJ family.

It localises to the cell inner membrane. Functionally, heme chaperone required for the biogenesis of c-type cytochromes. Transiently binds heme delivered by CcmC and transfers the heme to apo-cytochromes in a process facilitated by CcmF and CcmH. This chain is Cytochrome c-type biogenesis protein CcmE 2, found in Pseudomonas fluorescens (strain Pf0-1).